The following is a 163-amino-acid chain: Large ribosomal subunit protein uL10 (163 aa).

The protein belongs to the universal ribosomal protein uL10 family. Part of the ribosomal stalk of the 50S ribosomal subunit. The N-terminus interacts with L11 and the large rRNA to form the base of the stalk. The C-terminus forms an elongated spine to which L12 dimers bind in a sequential fashion forming a multimeric L10(L12)X complex.

Forms part of the ribosomal stalk, playing a central role in the interaction of the ribosome with GTP-bound translation factors. The chain is Large ribosomal subunit protein uL10 from Haemophilus ducreyi (strain 35000HP / ATCC 700724).